The chain runs to 907 residues: Protein translocase subunit SecA (907 aa).

Residues Gln-87, 105 to 109, and Asp-512 contribute to the ATP site; that span reads GEGKT. The interval 834–907 is disordered; that stretch reads QEDVERMEEQ…KKYKQCHGKI (74 aa). Basic and acidic residues-rich tracts occupy residues 836-853 and 873-888; these read DVERMEEQRRLQAEEAAR and EEAHSPMVREERKVGR. Cys-892, Cys-894, Cys-903, and His-904 together coordinate Zn(2+). Over residues 898 to 907 the composition is skewed to basic residues; the sequence is KKYKQCHGKI.

Belongs to the SecA family. As to quaternary structure, monomer and homodimer. Part of the essential Sec protein translocation apparatus which comprises SecA, SecYEG and auxiliary proteins SecDF-YajC and YidC. Zn(2+) is required as a cofactor.

The protein localises to the cell inner membrane. Its subcellular location is the cytoplasm. The enzyme catalyses ATP + H2O + cellular proteinSide 1 = ADP + phosphate + cellular proteinSide 2.. Its function is as follows. Part of the Sec protein translocase complex. Interacts with the SecYEG preprotein conducting channel. Has a central role in coupling the hydrolysis of ATP to the transfer of proteins into and across the cell membrane, serving both as a receptor for the preprotein-SecB complex and as an ATP-driven molecular motor driving the stepwise translocation of polypeptide chains across the membrane. The polypeptide is Protein translocase subunit SecA (Aliivibrio fischeri (strain ATCC 700601 / ES114) (Vibrio fischeri)).